Consider the following 224-residue polypeptide: Peptidyl-prolyl cis-trans isomerase FKBP3 (224 aa).

Ala-2 carries the N-acetylalanine modification. Position 36 is a phosphoserine (Ser-36). Over residues 89–102 the composition is skewed to basic and acidic residues; the sequence is KLNEDKPKETKSEE. The interval 89–113 is disordered; the sequence is KLNEDKPKETKSEETLDEGPPKYTK. Lys-99 carries the N6-acetyllysine modification. Residues 128–224 form the PPIase FKBP-type domain; that stretch reads GDVVHCWYTG…IFEVELVDID (97 aa). Ser-152 bears the Phosphoserine mark. Lys-170 carries the post-translational modification N6-acetyllysine.

This sequence belongs to the FKBP-type PPIase family.

Its subcellular location is the nucleus. It carries out the reaction [protein]-peptidylproline (omega=180) = [protein]-peptidylproline (omega=0). Inhibited preferentially by rapamycin over FK506. In terms of biological role, FK506- and rapamycin-binding proteins (FKBPs) constitute a family of receptors for the two immunosuppressants which inhibit T-cell proliferation by arresting two dinstinct cytoplasmic signal transmission pathways. PPIases accelerate the folding of proteins. The polypeptide is Peptidyl-prolyl cis-trans isomerase FKBP3 (FKBP3) (Bos taurus (Bovine)).